The sequence spans 442 residues: Probable carboxypeptidase PAAG_00768 (442 aa).

An N-terminal signal peptide occupies residues Met-1–Ala-20. A glycan (N-linked (GlcNAc...) asparagine) is linked at Asn-102. A Zn(2+)-binding site is contributed by Asp-160. Glu-192 (proton acceptor) is an active-site residue. Zn(2+) is bound at residue Glu-193. N-linked (GlcNAc...) asparagine glycosylation is present at Asn-343.

It belongs to the peptidase M20A family. Zn(2+) is required as a cofactor.

The protein resides in the secreted. This is Probable carboxypeptidase PAAG_00768 from Paracoccidioides lutzii (strain ATCC MYA-826 / Pb01) (Paracoccidioides brasiliensis).